We begin with the raw amino-acid sequence, 332 residues long: Casein kinase II subunit alpha (332 aa).

The Protein kinase domain maps to 34–319 (YEVVRKVGRG…ALEAMTHPYF (286 aa)). ATP is bound by residues 40–48 (VGRGKYSEV) and K63. The active-site Proton acceptor is D151.

The protein belongs to the protein kinase superfamily. Ser/Thr protein kinase family. CK2 subfamily. Tetramer of two alpha and two beta chains (possible).

The catalysed reaction is L-seryl-[protein] + ATP = O-phospho-L-seryl-[protein] + ADP + H(+). The enzyme catalyses L-threonyl-[protein] + ATP = O-phospho-L-threonyl-[protein] + ADP + H(+). In terms of biological role, casein kinases are operationally defined by their preferential utilization of acidic proteins such as caseins as substrates. The alpha chain contains the catalytic site. This chain is Casein kinase II subunit alpha (ACK2), found in Zea mays (Maize).